A 257-amino-acid polypeptide reads, in one-letter code: Homeobox protein ceh-36 (257 aa).

Over residues 33-49 (SATTSSTTMAPMAPNSE) the composition is skewed to low complexity. 2 disordered regions span residues 33–63 (SATTSSTTMAPMAPNSESGRRAGRRERTSFN) and 113–156 (DRNN…GTPE). The homeobox DNA-binding region spans 55–117 (GRRERTSFNR…NRRAKDRNNK (63 aa)). Residues 123–137 (HPGSTSSRSSNGSPH) are compositionally biased toward low complexity.

It belongs to the paired homeobox family. In terms of assembly, interacts with sox-2. As to expression, expressed in ASE and AWC chemosensory neurons. Expressed left-right asymmetrically in the embryo, in the grandmother cell and the mother cell to the MI pharyngeal motorneuron but in neither analogous precursors of the e3D neuron.

It localises to the nucleus. Functionally, probable transcription factor, acting as a progenitor identity factor regulating the development of lineally-related embryonic cells including glial, excretory and neuronal cells. Mediates chemosensory function of ASE and AWC neurons. In ASE neurons, required to diversify the fate of the ASEL neurons from the ASER neurons. Acts cell-autonomously to establish a neuronal left right asymmetry, possibly promoting asymmetric expression of the helix-loop-helix proteins ngn-1 and hlh-2. In cooperation with the transcription factor sox-2, required for the differentiation of AWC olfactory neurons. May regulate the expression of sox-2 in AWC olfactory neurons. This Caenorhabditis elegans protein is Homeobox protein ceh-36.